We begin with the raw amino-acid sequence, 207 residues long: Large ribosomal subunit protein uL4 (207 aa).

The tract at residues 56 to 76 is disordered; the sequence is EVRGGGRKPWRQKGTGRARAG. Positions 60 to 71 are enriched in basic residues; sequence GGRKPWRQKGTG.

Belongs to the universal ribosomal protein uL4 family. As to quaternary structure, part of the 50S ribosomal subunit.

Functionally, one of the primary rRNA binding proteins, this protein initially binds near the 5'-end of the 23S rRNA. It is important during the early stages of 50S assembly. It makes multiple contacts with different domains of the 23S rRNA in the assembled 50S subunit and ribosome. Its function is as follows. Forms part of the polypeptide exit tunnel. The polypeptide is Large ribosomal subunit protein uL4 (Desulfitobacterium hafniense (strain Y51)).